The primary structure comprises 279 residues: MTSTATVTVPPRITAENVATLFPEVDTSLAREVFPSTVEGSAKDSEELAGYDEEQVRLMDEVCIVLDDDDKPIGSASKKACHLMTNIDRGLLHRAFSVFLFDSNNRLLLQQRASEKITFPDMWTNTCCSHPLGIPGETGAELDAAVLGVKRAAQRKLDQELGIKAEQVPLEKFEFFTRIHYKAPSDGKWGEHETVTDTQILVDYILFIQADVDLNVNPNEVRDTKYVSAQELKQMFTQPGLKFTPWFKLICNSMLFEWWSYLGTADLDKYKGEKEIRRM.

Lys78 contributes to the substrate binding site. Positions 82 and 93 each coordinate Mg(2+). In terms of domain architecture, Nudix hydrolase spans 91 to 249 (LLHRAFSVFL…GLKFTPWFKL (159 aa)). Substrate contacts are provided by Gln111 and Lys116. Cys128 is an active-site residue. Ser129 is a binding site for substrate. The short motif at 129-162 (SHPLGIPGETGAELDAAVLGVKRAAQRKLDQELG) is the Nudix box element. The Mg(2+) site is built by Glu191 and Glu193. Glu193 is an active-site residue.

The protein belongs to the IPP isomerase type 1 family. Requires Mg(2+) as cofactor.

The enzyme catalyses isopentenyl diphosphate = dimethylallyl diphosphate. It functions in the pathway isoprenoid biosynthesis; dimethylallyl diphosphate biosynthesis; dimethylallyl diphosphate from isopentenyl diphosphate: step 1/1. In terms of biological role, isopentenyl-diphosphate delta-isomerase; part of the second module of ergosterol biosynthesis pathway that includes the middle steps of the pathway. Idi1 catalyzes the 1,3-allylic rearrangement of isopentenyl (IPP) to its highly electrophilic allylic isomer, dimethylallyl diphosphate (DMAPP). The second module is carried out in the vacuole and involves the formation of farnesyl diphosphate, which is also an important intermediate in the biosynthesis of ubiquinone, dolichol, heme and prenylated proteins. Activity by the mevalonate kinase erg12 (AFUA_4G07780) first converts mevalonate into 5-phosphomevalonate. 5-phosphomevalonate is then further converted to 5-diphosphomevalonate by the phosphomevalonate kinase erg8 (AFUA_5G10680). The diphosphomevalonate decarboxylase mvd1 (AFUA_4G07130) then produces isopentenyl diphosphate. The isopentenyl-diphosphate delta-isomerase idi1 (AFUA_6G11160) then catalyzes the 1,3-allylic rearrangement of the homoallylic substrate isopentenyl (IPP) to its highly electrophilic allylic isomer, dimethylallyl diphosphate (DMAPP). Finally the farnesyl diphosphate synthase erg20 (AFUA_5G02450) catalyzes the sequential condensation of isopentenyl pyrophosphate with dimethylallyl pyrophosphate, and then with the resultant geranylpyrophosphate to the ultimate product farnesyl pyrophosphate. The sequence is that of Isopentenyl-diphosphate delta-isomerase idi1 from Aspergillus fumigatus (strain ATCC MYA-4609 / CBS 101355 / FGSC A1100 / Af293) (Neosartorya fumigata).